The sequence spans 225 residues: Orotate phosphoribosyltransferase (225 aa).

Residue K32 participates in 5-phospho-alpha-D-ribose 1-diphosphate binding. Residue 40–41 (FF) participates in orotate binding. 5-phospho-alpha-D-ribose 1-diphosphate-binding positions include 78–79 (YK), R104, K105, K108, H110, and 129–137 (DDVISAGTS). S133 and R161 together coordinate orotate.

This sequence belongs to the purine/pyrimidine phosphoribosyltransferase family. PyrE subfamily. As to quaternary structure, homodimer. Mg(2+) serves as cofactor.

It catalyses the reaction orotidine 5'-phosphate + diphosphate = orotate + 5-phospho-alpha-D-ribose 1-diphosphate. Its pathway is pyrimidine metabolism; UMP biosynthesis via de novo pathway; UMP from orotate: step 1/2. In terms of biological role, catalyzes the transfer of a ribosyl phosphate group from 5-phosphoribose 1-diphosphate to orotate, leading to the formation of orotidine monophosphate (OMP). This is Orotate phosphoribosyltransferase from Cupriavidus metallidurans (strain ATCC 43123 / DSM 2839 / NBRC 102507 / CH34) (Ralstonia metallidurans).